The sequence spans 440 residues: Thymidine phosphorylase (440 aa).

It belongs to the thymidine/pyrimidine-nucleoside phosphorylase family. Homodimer.

The catalysed reaction is thymidine + phosphate = 2-deoxy-alpha-D-ribose 1-phosphate + thymine. The protein operates within pyrimidine metabolism; dTMP biosynthesis via salvage pathway; dTMP from thymine: step 1/2. The enzymes which catalyze the reversible phosphorolysis of pyrimidine nucleosides are involved in the degradation of these compounds and in their utilization as carbon and energy sources, or in the rescue of pyrimidine bases for nucleotide synthesis. The protein is Thymidine phosphorylase of Escherichia coli O127:H6 (strain E2348/69 / EPEC).